A 461-amino-acid polypeptide reads, in one-letter code: UPF0053 protein YhdT (461 aa).

The CNNM transmembrane domain occupies 1 to 202; that stretch reads MDDIDSLILI…LKNGEINPSE (202 aa). The next 3 helical transmembrane spans lie at 8–28, 103–123, and 137–157; these read ILIG…FAIV, VSFA…GELA, and LLIA…IWIL. 2 CBS domains span residues 221–280 and 290–347; these read MIPR…MTEE and YVRP…IRDE.

Belongs to the UPF0053 family.

It localises to the cell membrane. This is UPF0053 protein YhdT (yhdT) from Bacillus subtilis (strain 168).